Reading from the N-terminus, the 514-residue chain is UDP-N-acetylmuramoyl-L-alanyl-D-glutamate--2,6-diaminopimelate ligase (514 aa).

A UDP-N-acetyl-alpha-D-muramoyl-L-alanyl-D-glutamate-binding site is contributed by Thr37. 125 to 131 (GTNGKTS) is a binding site for ATP. Residues 167–168 (TT), Ser194, Gln200, and Arg202 contribute to the UDP-N-acetyl-alpha-D-muramoyl-L-alanyl-D-glutamate site. At Lys234 the chain carries N6-carboxylysine. Meso-2,6-diaminopimelate is bound by residues Arg406, 430 to 433 (DNPR), Gly481, and Glu485. The short motif at 430–433 (DNPR) is the Meso-diaminopimelate recognition motif element.

This sequence belongs to the MurCDEF family. MurE subfamily. Requires Mg(2+) as cofactor. Carboxylation is probably crucial for Mg(2+) binding and, consequently, for the gamma-phosphate positioning of ATP.

The protein localises to the cytoplasm. It carries out the reaction UDP-N-acetyl-alpha-D-muramoyl-L-alanyl-D-glutamate + meso-2,6-diaminopimelate + ATP = UDP-N-acetyl-alpha-D-muramoyl-L-alanyl-gamma-D-glutamyl-meso-2,6-diaminopimelate + ADP + phosphate + H(+). Its pathway is cell wall biogenesis; peptidoglycan biosynthesis. Its function is as follows. Catalyzes the addition of meso-diaminopimelic acid to the nucleotide precursor UDP-N-acetylmuramoyl-L-alanyl-D-glutamate (UMAG) in the biosynthesis of bacterial cell-wall peptidoglycan. The protein is UDP-N-acetylmuramoyl-L-alanyl-D-glutamate--2,6-diaminopimelate ligase of Ralstonia nicotianae (strain ATCC BAA-1114 / GMI1000) (Ralstonia solanacearum).